The following is a 358-amino-acid chain: Aromatic amino acid aminotransferase (358 aa).

Lysine 219 is subject to N6-(pyridoxal phosphate)lysine.

Belongs to the class-II pyridoxal-phosphate-dependent aminotransferase family. Homodimer. It depends on pyridoxal 5'-phosphate as a cofactor.

It carries out the reaction an aromatic L-alpha-amino acid + 2-oxoglutarate = an aromatic oxo-acid + L-glutamate. Functionally, aminotransferase that catalyzes the conversion of aromatic amino acids and 2-oxoglutarate into corresponding aromatic oxo acids and L-glutamate. This chain is Aromatic amino acid aminotransferase, found in Nocardia farcinica (strain IFM 10152).